The following is a 305-amino-acid chain: Alpha-N-acetylgalactosaminide alpha-2,6-sialyltransferase 3 (305 aa).

Residues 1–8 are Cytoplasmic-facing; it reads MACILKRK. A helical; Signal-anchor for type II membrane protein membrane pass occupies residues 9 to 28; the sequence is SVIAVSFIAAFLFLLVVRLV. Residues 29–305 lie on the Lumenal side of the membrane; the sequence is NEVNFPLLLN…IFTHPNWTLS (277 aa). A disulfide bond links cysteine 80 and cysteine 229. N-linked (GlcNAc...) asparagine glycosylation is found at asparagine 148, asparagine 239, and asparagine 301.

The protein belongs to the glycosyltransferase 29 family. In terms of tissue distribution, expressed in brain and kidney. Observed in the epithelium of the proximal tubules, marginal expression was also found in the distal tubules and collecting tubules.

The protein resides in the golgi apparatus membrane. The catalysed reaction is an alpha-Neu5Ac-(2-&gt;3)-beta-D-Gal-(1-&gt;3)-D-GlcNAc derivative + CMP-N-acetyl-beta-neuraminate = an alpha-Neu5Ac-(2-&gt;3)-beta-D-Gal-(1-&gt;3)-[alpha-Neu5Ac-(2-&gt;6)]-D-GlcNAc derivative + CMP + H(+). It catalyses the reaction a ganglioside GM1b (d18:1(4E)) + CMP-N-acetyl-beta-neuraminate = a ganglioside GD1alpha (d18:1(4E)) + CMP + H(+). The enzyme catalyses a globoside MSGG + CMP-N-acetyl-beta-neuraminate = a globoside DSGG + CMP + H(+). It carries out the reaction 3-O-[alpha-Neu5Ac-(2-&gt;3)-beta-D-Gal-(1-&gt;3)-alpha-D-GalNAc]-L-Ser-[protein] + CMP-N-acetyl-beta-neuraminate = a 3-O-{alpha-Neu5Ac-(2-&gt;3)-beta-D-Gal-(1-&gt;3)-[alpha-Neu5Ac-(2-&gt;6)]-alpha-D-GalNAc}-L-seryl-[protein] + CMP + H(+). The catalysed reaction is 3-O-[alpha-Neu5Ac-(2-&gt;3)-beta-D-Gal-(1-&gt;3)-alpha-D-GalNAc]-L-Thr-[protein] + CMP-N-acetyl-beta-neuraminate = a 3-O-{alpha-Neu5Ac-(2-&gt;3)-beta-D-Gal-(1-&gt;3)-[alpha-Neu5Ac-(2-&gt;6)]-alpha-D-GalNAc}-L-threonyl-[protein] + CMP + H(+). The protein operates within protein modification; protein glycosylation. Its pathway is glycolipid biosynthesis. In terms of biological role, transfers the sialyl group (N-acetyl-alpha-neuraminyl or NeuAc) from CMP-NeuAc to the GalNAc residue on the NeuAc-alpha-2,3-Gal-beta-1,3-GalNAc sequence of glycoproteins and glycolipids forming an alpha-2,6-linkage. Produces branched type disialyl structures by transfer of a sialyl group onto a GalNAc residue inside the backbone core chains. ST6GalNAcIII prefers glycolipids to glycoproteins, predominantly catalyzing the biosynthesis of ganglioside GD1alpha from GM1b. GD1alpha is a critical molecule in the communication and interaction between neuronal cells and their supportive cells, particularly in brain tissues, and functions as an adhesion molecule in the process of metastasis. Sialylation of glycoproteins or glycosphingolipids is very important in tumor development, neuronal development, nerve repair, immunological processes and regulation of hormone sensitivity. The sequence is that of Alpha-N-acetylgalactosaminide alpha-2,6-sialyltransferase 3 (ST6GALNAC3) from Homo sapiens (Human).